The following is a 315-amino-acid chain: Homoserine O-succinyltransferase (315 aa).

C142 functions as the Acyl-thioester intermediate in the catalytic mechanism. Substrate is bound by residues K163 and S192. Catalysis depends on H235, which acts as the Proton acceptor. E237 is a catalytic residue. R249 serves as a coordination point for substrate. Over residues 249–258 (RDCEKSDNAP) the composition is skewed to basic and acidic residues. The tract at residues 249–271 (RDCEKSDNAPKPENYFPDDDATK) is disordered.

It belongs to the MetA family.

The protein localises to the cytoplasm. The catalysed reaction is L-homoserine + succinyl-CoA = O-succinyl-L-homoserine + CoA. Its pathway is amino-acid biosynthesis; L-methionine biosynthesis via de novo pathway; O-succinyl-L-homoserine from L-homoserine: step 1/1. Transfers a succinyl group from succinyl-CoA to L-homoserine, forming succinyl-L-homoserine. This is Homoserine O-succinyltransferase from Pseudoalteromonas translucida (strain TAC 125).